A 563-amino-acid chain; its full sequence is Nigrin b (563 aa).

The signal sequence occupies residues 1-25 (MRVVAAAMLYFYIVVLAICSVGIQG). The active site involves glutamate 188. Asparagine 221 carries an N-linked (GlcNAc...) asparagine glycan. Cystine bridges form between cysteine 274–cysteine 302, cysteine 319–cysteine 338, and cysteine 360–cysteine 377. Ricin B-type lectin domains follow at residues 305–431 (RTSF…WTVT) and 434–559 (VKPI…WVTQ). A 1-alpha repeat occupies 316 to 356 (DGLCVDVRNGYDTDGTPLQLWPCGTQRNQRWTFDSDDTIRS). The stretch at 357–397 (MGKCMTANGLNNGSNIVIFNCSTAAENAIKWEVPIDGSIIN) is one 1-beta repeat. 2 N-linked (GlcNAc...) asparagine glycosylation sites follow: asparagine 368 and asparagine 376. A 1-gamma repeat occupies 400–432 (SGLVMTAPRAASRTILLLEDNIYAASQGWTVTN). A 2-alpha repeat occupies 445–482 (KEMCLQSNGENNGVWMEDCEATSLQQQWALYGDRTIRV). Cysteine 448 and cysteine 463 are joined by a disulfide. A glycan (N-linked (GlcNAc...) asparagine) is linked at asparagine 483. A 2-beta repeat occupies 486–524 (RGLCVTTNGYNSKDLIIILKCQGLPSQRWFFNSDGAIVN). A disulfide bridge links cysteine 489 with cysteine 506. The stretch at 527–554 (SRHVMDVRASNVSLREIIIFPATGNPNQ) is one 2-gamma repeat. Residue asparagine 537 is glycosylated (N-linked (GlcNAc...) asparagine).

This sequence in the N-terminal section; belongs to the ribosome-inactivating protein family. Type 2 RIP subfamily. In terms of assembly, disulfide-linked dimer of A and B chains.

The catalysed reaction is Endohydrolysis of the N-glycosidic bond at one specific adenosine on the 28S rRNA.. Non-toxic type 2 RIP which strongly inhibits mammalian protein synthesis but does not affect plant nor bacterial protein synthesis. The A chain is responsible for inhibiting protein synthesis through the catalytic inactivation of 60S ribosomal subunits by removing adenine from position 4,324 of 28S rRNA. Functionally, the B chain is a galactose-specific lectin that facilitates the binding of nigrin b to the cell membrane that precedes endocytosis. The chain is Nigrin b from Sambucus nigra (European elder).